The chain runs to 1794 residues: MATPRGQTVWFGNEFPNDDLKDLFRRLHQHSKDRRFRLLSVFLEESTAILKEEVANLPQQLQELVPHFDTACTLPEVDFRQGPLGAAMESALLTILELGMLIGHYEAEDIEWDLDPSRTILAGLSIGILAGAAVALSSSLADVAKVGAESVRVSFRLGVYVADISTKLEAPQSDGTLQSWAHVVTGMSHEAVQEELSQYNAVTQNPEITKVFVSAADKTSVSVTGPPSRIKAAFQHSPSLRYSKSLPLPVYDGLCHAAHLYSQDDIEIVINSAKSVIPTSRPVRLPLISSQTGKPFAAKTAGELFLEIGTELLTGTIFLDTVTAGILEHVKLQEPTGNYEIVSFRMSQVLNGILTAIETDFPELGRARRDMVSWVHGDYGARRPSSYAASKLAIVGMACRLPGGANDPELFWELLEQGRDTLTTVPPDRFDLNTHYDPTGKTENATQTPFGNFIDRPGYFDAGFFNMSPREAEQTDPMHRLALVTAYEAMEMAGMVPGRTPSTRPNRIGTFYGQASDDWRELNASQNISTYAVPGGERAFANGRINYFFKFSGPSYNIDTACSSGLAAVQAACSALWAGEADTVIAGGLNVITDPDNYAGLGNGHFLSKTGQCKVWDKDADGYCRADGIGSVVIKRLEDAEADNDNILAVILGARTNHSAEAVSITHPHAGAQKANYRQVLHQAGVNPLDVSYVELHGTGTQAGDAVESESVSDVFAPSTPRRRPDQRLYLGAVKSNIGHGEAAAGITSLLKALLVFQKNMIPKHIGIKTEINPIIPKDLERRHVGLAMENTPWPRPAGKKRLAVVNSFGAHGGNTTVLLEDAPERVKVSTQDDRTTHPVVISAKSKKSLQANIEKLLSWLDQNPDANLGDLSYTLCARRMHHSMRFGAAASGIAALQKTLRSWLDNPKASAELRAIPNDTPSVVLTFTGQGAYYSGMGRELLAEFSYFRTEVFQLDQIAQRLGFPSVVPVIDGSIDDGPASPVLTQLSVTVLEIALARFWSHLGIRISAVIGHSLGEYAAFAVAGVISATEALYLVGRRAQLTEERCTQGSHSMLSVRASEDDIEELIAGSPDTAELAYEVCCRNTPQDTVIGGTQESIDSIRQALEKNTIKCTQLDVPFAFHTAQMDPILDSLETLATPITFKAPSIPVLSPLLGSVVFDRKSIHAQYLRRATRETVDFVAAIEAAQDFGLVDAKTIWIDVGPHPICASLVRGIDSSASVISSCRRNEDNLATMSKSLVTLHLAGLTPCWAEYFRPREQEYSLLKLPTYSWNETDYWIPYIGTWTLDKALLKYGEKKAPLSLSMSRPSALRTSLVHQITTETVEATTATLHVLSDMQHPDFLEALHGHRMNNCGVATSSIWSDMAFTVGEYLYRRLVPQAKDVHMNLSDLEVLHAQVALEKKGSVQPLVLKAHLNLSTSSMSLAWFNASAETGECAAESFATCVVRFEDPAAWTREWDRLSHLVLGRIEALEQRAVEGKASKLSKPLAYTLFKNVVDYADRYRGMDQVVLYEHEAVAEVTLVAERHGTWHTPPHWIDSVSHLAGLVMNGSNASNTRDYFYVTPGCSSFRLLNPLKAGGKYRSYVRMFPLPEEANMYAGDVYILEGEQIVGMVGHIRFRRVPRLLMDRFFSPAAASHTEKQLQETAPSATNVKKSTPPPAEAPISVPVAPGNPVAIPLPTASKSQVATPPLTPPSQEDSPGESAVITPATSDRGDSTDAGVVGQCLKVMARETGLEVDALTPDASFVQLGIDSLMSLVLSEKFRAELGIEIKSSLFLECPTIGEMTAWLEEYC.

The N-terminal acylcarrier protein transacylase domain (SAT) stretch occupies residues 19-256; that stretch reads DLKDLFRRLH…PLPVYDGLCH (238 aa). One can recognise a Ketosynthase family 3 (KS3) domain in the interval 389–822; sequence ASKLAIVGMA…GGNTTVLLED (434 aa). The span at 428–440 shows a compositional bias: basic and acidic residues; the sequence is DRFDLNTHYDPTG. The segment at 428–448 is disordered; the sequence is DRFDLNTHYDPTGKTENATQT. Catalysis depends on for beta-ketoacyl synthase activity residues Cys562, His697, and His740. The interval 927-1230 is malonyl-CoA:ACP transacylase (MAT) domain; sequence TFTGQGAYYS…SVISSCRRNE (304 aa). The interval 1314–1633 is product template (PT) domain; the sequence is TSLVHQITTE…RLLMDRFFSP (320 aa). An N-terminal hotdog fold region spans residues 1318 to 1454; it reads HQITTETVEA…CVVRFEDPAA (137 aa). In terms of domain architecture, PKS/mFAS DH spans 1318-1628; it reads HQITTETVEA…FRRVPRLLMD (311 aa). The active-site Proton acceptor; for dehydratase activity is the His1350. The interval 1482–1628 is C-terminal hotdog fold; sequence ASKLSKPLAY…FRRVPRLLMD (147 aa). The active-site Proton donor; for dehydratase activity is the Asp1539. The disordered stretch occupies residues 1637 to 1719; it reads SHTEKQLQET…ATSDRGDSTD (83 aa). The segment covering 1644–1655 has biased composition (polar residues); that stretch reads QETAPSATNVKK. The Carrier domain occupies 1717–1794; the sequence is STDAGVVGQC…EMTAWLEEYC (78 aa). Ser1754 is modified (O-(pantetheine 4'-phosphoryl)serine).

Requires pantetheine 4'-phosphate as cofactor.

The protein operates within secondary metabolite biosynthesis. Its function is as follows. Non-reducing polyketide synthase; part of the gene cluster that mediates the biosynthesis of neosartoricin, a prenylated anthracenone that exhibits T-cell antiproliferative activity, suggestive of a physiological role as an immunosuppressive agent. The non-reducing polyketide synthase nscA probably synthesizes and cyclizes the decaketide backbone. The hydrolase nscB then mediates the product release through hydrolysis followed by spontaneous decarboxylation. The prenyltransferase nscD catalyzes the addition of the dimethylallyl group to the aromatic C5. The FAD-dependent monooxygenase nscC is then responsible for the stereospecific hydroxylation at C2. There is no gene encoding O-acetyltransferase in the nsc gene cluster; thus, the last step of 2-O-acetylation leading to neosartoricin may be catalyzed by an unidentified O-acetyltransferase. This Aspergillus fumigatus (strain ATCC MYA-4609 / CBS 101355 / FGSC A1100 / Af293) (Neosartorya fumigata) protein is Non-reducing polyketide synthase nscA.